Here is a 553-residue protein sequence, read N- to C-terminus: Formate--tetrahydrofolate ligase (553 aa).

Position 63–70 (63–70 (TPAGEGKT)) interacts with ATP.

The protein belongs to the formate--tetrahydrofolate ligase family.

It catalyses the reaction (6S)-5,6,7,8-tetrahydrofolate + formate + ATP = (6R)-10-formyltetrahydrofolate + ADP + phosphate. It participates in one-carbon metabolism; tetrahydrofolate interconversion. This is Formate--tetrahydrofolate ligase from Oenococcus oeni (strain ATCC BAA-331 / PSU-1).